The primary structure comprises 303 residues: Guanosine-inosine kinase (303 aa).

Belongs to the carbohydrate kinase PfkB family. Homodimer. The cofactor is Mg(2+).

It carries out the reaction guanosine + ATP = GMP + ADP + H(+). The catalysed reaction is inosine + ATP = IMP + ADP + H(+). It functions in the pathway purine metabolism; IMP biosynthesis via salvage pathway; IMP from inosine: step 1/1. The protein operates within purine metabolism; GMP biosynthesis via salvage pathway. With respect to regulation, kinase activity is stimulated by pyrimidine nucleotides, especially CMP and CTP, and inhibited by AMP, ADP and GMP. Activity is stimulated by potassium or ammonium ions. In terms of biological role, catalyzes the phosphorylation of guanosine and inosine to GMP and IMP, respectively. Can also use deoxyguanosine. Shows a strong preference for guanosine. dATP, GTP and dGTP can serve as phosphate donors. The sequence is that of Guanosine-inosine kinase from Exiguobacterium acetylicum (Brevibacterium acetylicum).